Consider the following 284-residue polypeptide: Formamidopyrimidine-DNA glycosylase (284 aa).

Catalysis depends on Pro-2, which acts as the Schiff-base intermediate with DNA. Catalysis depends on Glu-3, which acts as the Proton donor. The Proton donor; for beta-elimination activity role is filled by Lys-60. Residues His-99, Arg-118, and Arg-163 each coordinate DNA. The segment at 248–282 (WVYGRQGQPCRTCGQTIERIKLVGRSTHFCPQCQP) adopts an FPG-type zinc-finger fold. The active-site Proton donor; for delta-elimination activity is the Arg-272.

This sequence belongs to the FPG family. In terms of assembly, monomer. Zn(2+) is required as a cofactor.

It carries out the reaction Hydrolysis of DNA containing ring-opened 7-methylguanine residues, releasing 2,6-diamino-4-hydroxy-5-(N-methyl)formamidopyrimidine.. The catalysed reaction is 2'-deoxyribonucleotide-(2'-deoxyribose 5'-phosphate)-2'-deoxyribonucleotide-DNA = a 3'-end 2'-deoxyribonucleotide-(2,3-dehydro-2,3-deoxyribose 5'-phosphate)-DNA + a 5'-end 5'-phospho-2'-deoxyribonucleoside-DNA + H(+). Its function is as follows. Involved in base excision repair of DNA damaged by oxidation or by mutagenic agents. Acts as a DNA glycosylase that recognizes and removes damaged bases. Has a preference for oxidized purines, such as 7,8-dihydro-8-oxoguanine (8-oxoG). Has AP (apurinic/apyrimidinic) lyase activity and introduces nicks in the DNA strand. Cleaves the DNA backbone by beta-delta elimination to generate a single-strand break at the site of the removed base with both 3'- and 5'-phosphates. The protein is Formamidopyrimidine-DNA glycosylase of Acaryochloris marina (strain MBIC 11017).